A 122-amino-acid chain; its full sequence is Large ribosomal subunit protein uL14 (122 aa).

The protein belongs to the universal ribosomal protein uL14 family. As to quaternary structure, part of the 50S ribosomal subunit. Forms a cluster with proteins L3 and L19. In the 70S ribosome, L14 and L19 interact and together make contacts with the 16S rRNA in bridges B5 and B8.

Binds to 23S rRNA. Forms part of two intersubunit bridges in the 70S ribosome. The protein is Large ribosomal subunit protein uL14 of Pediococcus pentosaceus (strain ATCC 25745 / CCUG 21536 / LMG 10740 / 183-1w).